The sequence spans 273 residues: DNA replication complex GINS protein psf2 (273 aa).

Disordered regions lie at residues 88 to 110 and 240 to 273; these read KEDP…SQPG and ASAE…DMGL. Positions 244-257 are enriched in basic and acidic residues; sequence ATRREEEEEARRGG. The span at 261-273 shows a compositional bias: acidic residues; it reads GDGDEDSDEDMGL.

The protein belongs to the GINS2/PSF2 family. In terms of assembly, component of the GINS complex which is a heterotetramer of div-26/sld5, drc-1/psf1, drc-2/psf2 and drc-3/psf3.

The protein resides in the nucleus. Functionally, the GINS complex plays an essential role in the initiation of DNA replication. Has a role in chromosome segregation. This is DNA replication complex GINS protein psf2 (drc-2) from Neurospora crassa (strain ATCC 24698 / 74-OR23-1A / CBS 708.71 / DSM 1257 / FGSC 987).